Consider the following 104-residue polypeptide: Small ribosomal subunit protein uS10 (104 aa).

This sequence belongs to the universal ribosomal protein uS10 family. Part of the 30S ribosomal subunit.

In terms of biological role, involved in the binding of tRNA to the ribosomes. The protein is Small ribosomal subunit protein uS10 of Alkaliphilus oremlandii (strain OhILAs) (Clostridium oremlandii (strain OhILAs)).